Here is a 191-residue protein sequence, read N- to C-terminus: Superoxide dismutase [Mn/Fe] (191 aa).

Fe(3+) is bound by residues His-27, His-74, Asp-157, and His-161. Mn(2+)-binding residues include His-27, His-74, Asp-157, and His-161.

The protein belongs to the iron/manganese superoxide dismutase family. In terms of assembly, homodimer. The cofactor is Mn(2+). It depends on Fe(3+) as a cofactor.

It catalyses the reaction 2 superoxide + 2 H(+) = H2O2 + O2. Its activity is regulated as follows. Inhibited by hydrogen peroxide. In terms of biological role, destroys superoxide anion radicals which are normally produced within the cells and which are toxic to biological systems. Catalyzes the dismutation of superoxide anion radicals into O2 and H2O2 by successive reduction and oxidation of the transition metal ion at the active site. The protein is Superoxide dismutase [Mn/Fe] (sodB) of Porphyromonas gingivalis (strain ATCC BAA-308 / W83).